A 290-amino-acid polypeptide reads, in one-letter code: Nucleotide-binding protein FN1089 (290 aa).

G11 to T18 contributes to the ATP binding site. D56–T59 is a GTP binding site.

Belongs to the RapZ-like family.

Displays ATPase and GTPase activities. The chain is Nucleotide-binding protein FN1089 from Fusobacterium nucleatum subsp. nucleatum (strain ATCC 25586 / DSM 15643 / BCRC 10681 / CIP 101130 / JCM 8532 / KCTC 2640 / LMG 13131 / VPI 4355).